The primary structure comprises 97 residues: Aspartyl/glutamyl-tRNA(Asn/Gln) amidotransferase subunit C (97 aa).

This sequence belongs to the GatC family. Heterotrimer of A, B and C subunits.

It carries out the reaction L-glutamyl-tRNA(Gln) + L-glutamine + ATP + H2O = L-glutaminyl-tRNA(Gln) + L-glutamate + ADP + phosphate + H(+). The catalysed reaction is L-aspartyl-tRNA(Asn) + L-glutamine + ATP + H2O = L-asparaginyl-tRNA(Asn) + L-glutamate + ADP + phosphate + 2 H(+). Its function is as follows. Allows the formation of correctly charged Asn-tRNA(Asn) or Gln-tRNA(Gln) through the transamidation of misacylated Asp-tRNA(Asn) or Glu-tRNA(Gln) in organisms which lack either or both of asparaginyl-tRNA or glutaminyl-tRNA synthetases. The reaction takes place in the presence of glutamine and ATP through an activated phospho-Asp-tRNA(Asn) or phospho-Glu-tRNA(Gln). This chain is Aspartyl/glutamyl-tRNA(Asn/Gln) amidotransferase subunit C, found in Parasynechococcus marenigrum (strain WH8102).